The chain runs to 109 residues: Small ribosomal subunit protein bS6 (109 aa).

It belongs to the bacterial ribosomal protein bS6 family.

In terms of biological role, binds together with bS18 to 16S ribosomal RNA. This chain is Small ribosomal subunit protein bS6, found in Ehrlichia canis (strain Jake).